The following is a 600-amino-acid chain: UvrABC system protein C (600 aa).

One can recognise a GIY-YIG domain in the interval 15–100 (NSAGVYQYFN…IKQLHPKYNI (86 aa)). The region spanning 203–238 (SVLLKNLEKQMLVLAQNENYEEAAKVRDQIAMIKDL) is the UVR domain.

It belongs to the UvrC family. Interacts with UvrB in an incision complex.

It localises to the cytoplasm. Functionally, the UvrABC repair system catalyzes the recognition and processing of DNA lesions. UvrC both incises the 5' and 3' sides of the lesion. The N-terminal half is responsible for the 3' incision and the C-terminal half is responsible for the 5' incision. The protein is UvrABC system protein C of Campylobacter jejuni (strain RM1221).